We begin with the raw amino-acid sequence, 356 residues long: Ion-translocating oxidoreductase complex subunit D (356 aa).

4 helical membrane passes run 20 to 40 (LMLL…WFFG), 42 to 62 (GVLV…ALAI), 68 to 88 (PVGF…IGVS), and 117 to 137 (GFNP…SFPV). Thr-177 carries the post-translational modification FMN phosphoryl threonine. The next 5 helical transmembrane spans lie at 205 to 225 (WASA…LYLL), 229 to 249 (VYTW…AALF), 259 to 279 (GSPL…FIVT), 292 to 312 (VIYG…GSSY), and 315 to 335 (GVAF…YYTT).

Belongs to the NqrB/RnfD family. In terms of assembly, the complex is composed of six subunits: RnfA, RnfB, RnfC, RnfD, RnfE and RnfG. The cofactor is FMN.

It is found in the cell inner membrane. Its function is as follows. Part of a membrane-bound complex that couples electron transfer with translocation of ions across the membrane. This is Ion-translocating oxidoreductase complex subunit D from Cellvibrio japonicus (strain Ueda107) (Pseudomonas fluorescens subsp. cellulosa).